Here is a 975-residue protein sequence, read N- to C-terminus: Macrophage colony-stimulating factor 1 receptor 1 (975 aa).

The first 17 residues, 1–17 (MQSFLPLLMGIMASASS), serve as a signal peptide directing secretion. At 18–519 (VEWRHPVIWF…VEVSDKLFTS (502 aa)) the chain is on the extracellular side. 5 consecutive Ig-like C2-type domains span residues 34-113 (SSEV…VYVK), 125-208 (SLRV…INVI), 221-310 (MDEY…LLVV), 329-407 (GLSV…FHVK), and 404-513 (FHVK…VEVS). 3 disulfide bridges follow: Cys-49–Cys-93, Cys-140–Cys-189, and Cys-236–Cys-292. Asn-156, Asn-165, Asn-246, Asn-250, Asn-289, Asn-301, Asn-399, Asn-420, and Asn-451 each carry an N-linked (GlcNAc...) asparagine glycan. A disulfide bridge connects residues Cys-426 and Cys-495. A helical membrane pass occupies residues 520–540 (TLIGAAGVLAIFLLLLVFLLY). Over 541-975 (KYKQKPRFEI…LMKTNNYQFC (435 aa)) the chain is Cytoplasmic. The segment at 544–576 (QKPRFEIRWKIIEAREGNNYTFIDPTQLPYNEK) is regulatory juxtamembrane domain. At Tyr-563 the chain carries Phosphotyrosine; by autocatalysis. The Protein kinase domain maps to 584–918 (LKLGKVLGAG…MISQMINRLL (335 aa)). ATP contacts are provided by residues 590-598 (LGAGAFGKV) and Lys-619. A phosphotyrosine; by autocatalysis mark is found at Tyr-702 and Tyr-726. Asp-782 serves as the catalytic Proton acceptor. The interval 800-822 (DFGLARDIMNDSNYVVKGNARLP) is activation loop. Tyr-813 and Tyr-929 each carry phosphotyrosine; by autocatalysis. Positions 939–963 (EGEACDEPKRYDPPCERSCDHEEEE) are disordered. Over residues 944–958 (DEPKRYDPPCERSCD) the composition is skewed to basic and acidic residues. Position 972 is a phosphotyrosine; by autocatalysis (Tyr-972).

The protein belongs to the protein kinase superfamily. Tyr protein kinase family. CSF-1/PDGF receptor subfamily. As to quaternary structure, monomer. Homodimer. Interacts with CSF1. In terms of processing, autophosphorylated in response to CSF1 binding. autophosphorylation, leading to its degradation. Ubiquitinated. Becomes rapidly polyubiquitinated after autophosphorylation, leading to its degradation.

The protein localises to the cell membrane. It catalyses the reaction L-tyrosyl-[protein] + ATP = O-phospho-L-tyrosyl-[protein] + ADP + H(+). Present in an inactive conformation in the absence of bound ligand. CSF1 binding leads to dimerization and activation by autophosphorylation on tyrosine residues. Tyrosine-protein kinase that acts as a cell-surface receptor for CSF1 and plays an essential role in the regulation of survival, proliferation and differentiation of hematopoietic precursor cells, especially mononuclear phagocytes, such as macrophages and monocytes. Plays an important role in innate immunity and in inflammatory processes. Plays an important role in the regulation of osteoclast proliferation and differentiation, the regulation of bone resorption, and is required for normal bone development. Promotes reorganization of the actin cytoskeleton, regulates formation of membrane ruffles, cell adhesion and cell migration. Activates several signaling pathways in response to ligand binding. In Takifugu rubripes (Japanese pufferfish), this protein is Macrophage colony-stimulating factor 1 receptor 1 (csf1r1).